The primary structure comprises 429 residues: Glucose-1-phosphate adenylyltransferase (429 aa).

Residues Y116, G181, E196–K197, and S214 contribute to the alpha-D-glucose 1-phosphate site.

It belongs to the bacterial/plant glucose-1-phosphate adenylyltransferase family. In terms of assembly, homotetramer.

It catalyses the reaction alpha-D-glucose 1-phosphate + ATP + H(+) = ADP-alpha-D-glucose + diphosphate. Its pathway is glycan biosynthesis; glycogen biosynthesis. Involved in the biosynthesis of ADP-glucose, a building block required for the elongation reactions to produce glycogen. Catalyzes the reaction between ATP and alpha-D-glucose 1-phosphate (G1P) to produce pyrophosphate and ADP-Glc. The protein is Glucose-1-phosphate adenylyltransferase of Paramagnetospirillum magneticum (strain ATCC 700264 / AMB-1) (Magnetospirillum magneticum).